Here is a 586-residue protein sequence, read N- to C-terminus: Protein BONZAI 2 (586 aa).

Glycine 2 carries the N-myristoyl glycine lipid modification. C2 domains are found at residues 25 to 164 and 176 to 303; these read SAAT…ALEL and PQHN…NLAL. Residues aspartate 62, aspartate 68, aspartate 121, and aspartate 123 each coordinate Ca(2+). One can recognise a VWFA domain in the interval 344–563; that stretch reads NFMVAIDFTA…SVVEALLAEL (220 aa).

This sequence belongs to the copine family. In terms of assembly, interacts with BAP1 and BAP2. It depends on Ca(2+) as a cofactor. In terms of tissue distribution, expressed in roots, leaves and stems. Expressed in young growing tissues.

The protein localises to the cell membrane. Its function is as follows. Negative regulator of cell death and defense responses. May repress a number of R genes and may have effects in promoting growth and development. May function in membrane trafficking and in fusion of vesicles with plasma membrane. The chain is Protein BONZAI 2 (BON2) from Arabidopsis thaliana (Mouse-ear cress).